Consider the following 524-residue polypeptide: Gamma-taxilin (524 aa).

The segment covering M1–R10 has biased composition (basic and acidic residues). Disordered stretches follow at residues M1–I37 and L64–S86. Residues R12 and R24 each carry the omega-N-methylarginine modification. S79, S86, and S97 each carry phosphoserine. Residues R106–R115 are compositionally biased toward basic and acidic residues. The disordered stretch occupies residues R106 to N130. A coiled-coil region spans residues E153–D465. At Y283 the chain carries Phosphotyrosine. Positions V501–D524 are disordered. S512 is modified (phosphoserine).

The protein belongs to the taxilin family. As to quaternary structure, binds to the C-terminal coiled coil region of syntaxin family members STX1A, STX3A and STX4A. Forms a heterodimer with ATF4 in osteoblasts.

The protein localises to the nucleus membrane. The protein resides in the cytoplasm. Its subcellular location is the cytosol. Functionally, may be involved in intracellular vesicle traffic. Inhibits ATF4-mediated transcription, possibly by dimerizing with ATF4 to form inactive dimers that cannot bind DNA. May be involved in regulating bone mass density through an ATF4-dependent pathway. May be involved in cell cycle progression. This is Gamma-taxilin (Txlng) from Mus musculus (Mouse).